The primary structure comprises 543 residues: Hydroxylamine reductase (543 aa).

[4Fe-4S] cluster contacts are provided by Cys3, Cys6, Cys15, and Cys21. 8 residues coordinate hybrid [4Fe-2O-2S] cluster: His239, Glu263, Cys307, Cys398, Cys426, Cys451, Glu486, and Lys488. Residue Cys398 is modified to Cysteine persulfide.

The protein belongs to the HCP family. It depends on [4Fe-4S] cluster as a cofactor. Hybrid [4Fe-2O-2S] cluster serves as cofactor.

It localises to the cytoplasm. The catalysed reaction is A + NH4(+) + H2O = hydroxylamine + AH2 + H(+). Its function is as follows. Catalyzes the reduction of hydroxylamine to form NH(3) and H(2)O. The protein is Hydroxylamine reductase of Methanococcus vannielii (strain ATCC 35089 / DSM 1224 / JCM 13029 / OCM 148 / SB).